A 282-amino-acid chain; its full sequence is Undecaprenyl-diphosphatase (282 aa).

8 helical membrane-spanning segments follow: residues 2-22, 47-67, 90-110, 115-135, 152-172, 190-210, 225-245, and 259-279; these read FDFIKSIIIGIVEGLTEFLPV, FTAVFDYAIQLGAIFAVIQLY, WIKVIVGVLPAMVFGLLLNNF, LLNPWVVSATLIIYGIAFIVI, ITFKMALFIGLFQVLSLVPGT, FVAAEFSFFLSIPVMFGVTIL, AQLFVMLIGFVVSWVVALFAI, and IFGWYRIVVGILFLILGIAGL.

The protein belongs to the UppP family.

The protein resides in the cell membrane. The catalysed reaction is di-trans,octa-cis-undecaprenyl diphosphate + H2O = di-trans,octa-cis-undecaprenyl phosphate + phosphate + H(+). In terms of biological role, catalyzes the dephosphorylation of undecaprenyl diphosphate (UPP). Confers resistance to bacitracin. The chain is Undecaprenyl-diphosphatase from Leuconostoc citreum (strain KM20).